Reading from the N-terminus, the 102-residue chain is Small ribosomal subunit protein uS10 (102 aa).

This sequence belongs to the universal ribosomal protein uS10 family. Part of the 30S ribosomal subunit.

In terms of biological role, involved in the binding of tRNA to the ribosomes. The sequence is that of Small ribosomal subunit protein uS10 from Methylocella silvestris (strain DSM 15510 / CIP 108128 / LMG 27833 / NCIMB 13906 / BL2).